The primary structure comprises 394 residues: C-19 steroid 1alpha-hydroxylase (394 aa).

6 residues coordinate heme b: His81, Arg85, Arg281, Gly335, His338, and Cys340.

Belongs to the cytochrome P450 family. Heme b is required as a cofactor.

It catalyses the reaction testosterone + 2 reduced [2Fe-2S]-[ferredoxin] + O2 + 2 H(+) = 1alpha-hydroxytestosterone + 2 oxidized [2Fe-2S]-[ferredoxin] + H2O. The enzyme catalyses androst-4-ene-3,17-dione + 2 reduced [2Fe-2S]-[ferredoxin] + O2 + 2 H(+) = 1alpha-hydroxyandrost-4-ene-3,17-dione + 2 oxidized [2Fe-2S]-[ferredoxin] + H2O. Its function is as follows. Hydroxylase that can catalyze the in vitro conversion of the sesquiterpenoid nootkatone, a natural organic compound produced by some plants, to at least five hydrophilic products. The native ferredoxin reductase FdR_B and either Fdx2 or Fdx8 ferredoxins can act as the redox partners for the conversion of nootkatone. Functionally, in addition, acts as a steroid 1alpha-hydroxylase, when associated in vitro with the surrogate redox partners bovine adrenodoxin (Adx) and adrenodoxin reductase (Adr). Acts on several C-19 steroid substrates, including testosterone and androstenedione, which are hydroxylated to 1alpha-hydroxytestosterone and 1alpha-hydroxyandrostenedione, respectively. Can use their derivatives testosterone-acetate and 11-oxoandrostenedione, but not vitamin D3 and 25-hydroxyvitamin D3. Also catalyzes the hydroxylation of the C-21 steroid 11-deoxycorticosterone to 1alpha-hydroxy-11-deoxycorticosterone. Catalyzes the hydroxylation of the C-21 steroid progesterone, leading to the formation of seven products: two major (1alpha-hydroxyprogesterone and 17alpha-hydroxyprogesterone) and five minor products. This chain is C-19 steroid 1alpha-hydroxylase, found in Sorangium cellulosum (strain So ce56) (Polyangium cellulosum (strain So ce56)).